Reading from the N-terminus, the 186-residue chain is UPF0303 protein ZMO1353 (186 aa).

The protein belongs to the UPF0303 family.

The chain is UPF0303 protein ZMO1353 from Zymomonas mobilis subsp. mobilis (strain ATCC 31821 / ZM4 / CP4).